A 163-amino-acid polypeptide reads, in one-letter code: MNIKLVTYFLILVSSLKVNADLNHIQDSFKYQEAEQLTIELPWNDCTAIHKFLEEKLFFSEQQIKKENKIHEKYKQFYLQHNNKLSDFSMQFLEKKSEINSVETLISGFLKFCEDNFQTSKSKSHSLNFFQKQQDQWLHNIRNENYKTYYKKKYEDNTFRNIN.

This is an uncharacterized protein from Rickettsia prowazekii (strain Madrid E).